We begin with the raw amino-acid sequence, 167 residues long: 18.8 kDa class II heat shock protein (167 aa).

Residues 49-167 (DAKAMAATPA…KPKTVEVKVA (119 aa)) form the sHSP domain.

The protein belongs to the small heat shock protein (HSP20) family.

It is found in the cytoplasm. In Ipomoea nil (Japanese morning glory), this protein is 18.8 kDa class II heat shock protein (SHSP-2).